We begin with the raw amino-acid sequence, 99 residues long: Small ribosomal subunit protein uS19 (99 aa).

Residues 77 to 99 (TRTFHGHSGDKKAKVAKGGPGGR) are disordered.

The protein belongs to the universal ribosomal protein uS19 family.

Protein S19 forms a complex with S13 that binds strongly to the 16S ribosomal RNA. This Sorangium cellulosum (strain So ce56) (Polyangium cellulosum (strain So ce56)) protein is Small ribosomal subunit protein uS19.